A 1383-amino-acid polypeptide reads, in one-letter code: PAS domain-containing serine/threonine-protein kinase (1383 aa).

Met1 is modified (N-acetylmethionine). Ser19 carries the phosphoserine modification. Thr31 carries the phosphothreonine modification. PAS domains lie at 117 to 188 (SGSL…VEAD) and 333 to 400 (YQAS…SVQL). Residue Ser1000 is modified to Phosphoserine. Residues 1059–1311 (YNTISPLGSG…LEKLIRDPWV (253 aa)) enclose the Protein kinase domain. Residues 1065 to 1073 (LGSGAFGFV), Lys1088, and 1142 to 1149 (EKHGSGMD) each bind ATP. The Proton acceptor role is filled by Asp1188. Asp1206 contributes to the ATP binding site. A phosphothreonine; by autocatalysis mark is found at Thr1221 and Thr1225. A disordered region spans residues 1344–1383 (GSRSPSEMAQREGLCGPPAPRETRGDQHCLHLKDPSLPVS). Over residues 1364–1377 (RETRGDQHCLHLKD) the composition is skewed to basic and acidic residues.

It belongs to the protein kinase superfamily. CAMK Ser/Thr protein kinase family. Autophosphorylated on Thr-1221 and Thr-1225. Autophosphorylation is activated by phospholipids. In terms of tissue distribution, ubiquitously expressed. Strongly up-regulated in postmeiotic germ cells during spermatogenesis.

It localises to the cytoplasm. Its subcellular location is the nucleus. The enzyme catalyses L-seryl-[protein] + ATP = O-phospho-L-seryl-[protein] + ADP + H(+). It catalyses the reaction L-threonyl-[protein] + ATP = O-phospho-L-threonyl-[protein] + ADP + H(+). Protein kinase activity is inhibited by the first PAS domain: binding of an unidentified ligand desinhibits the protein kinase activity. May be activated by autophosphorylation on Thr-1221 and Thr-1225. Autophosphorylation is enhanced upon phosphatidylinositol monophosphate (phosphatidylinositol 4-phosphate) binding and inhibited upon phosphatidylinositol bi- and tri-phosphate binding. In contrast, phosphorylation of target proteins is inhibited upon all phosphatidylinositol-binding (phosphatidylinositol mono- bi- and tri-phosphate). Its function is as follows. Serine/threonine-protein kinase involved in energy homeostasis and protein translation. Phosphorylates EEF1A1, GYS1, PDX1 and RPS6. Probably plays a role under changing environmental conditions (oxygen, glucose, nutrition), rather than under standard conditions. Acts as a sensor involved in energy homeostasis: regulates glycogen synthase synthesis by mediating phosphorylation of GYS1, leading to GYS1 inactivation. May be involved in glucose-stimulated insulin production in pancreas and regulation of glucagon secretion by glucose in alpha cells; however such data require additional evidences. May play a role in regulation of protein translation by phosphorylating EEF1A1, leading to increase translation efficiency. May also participate in respiratory regulation. The sequence is that of PAS domain-containing serine/threonine-protein kinase (Pask) from Mus musculus (Mouse).